The sequence spans 262 residues: Hydroxyethylthiazole kinase (262 aa).

Residue methionine 43 participates in substrate binding. 2 residues coordinate ATP: arginine 118 and threonine 164. Alanine 191 is a binding site for substrate.

It belongs to the Thz kinase family. Requires Mg(2+) as cofactor.

The enzyme catalyses 5-(2-hydroxyethyl)-4-methylthiazole + ATP = 4-methyl-5-(2-phosphooxyethyl)-thiazole + ADP + H(+). The protein operates within cofactor biosynthesis; thiamine diphosphate biosynthesis; 4-methyl-5-(2-phosphoethyl)-thiazole from 5-(2-hydroxyethyl)-4-methylthiazole: step 1/1. Functionally, catalyzes the phosphorylation of the hydroxyl group of 4-methyl-5-beta-hydroxyethylthiazole (THZ). This chain is Hydroxyethylthiazole kinase, found in Cereibacter sphaeroides (strain ATCC 17029 / ATH 2.4.9) (Rhodobacter sphaeroides).